Here is a 209-residue protein sequence, read N- to C-terminus: Imidazole glycerol phosphate synthase subunit HisH (209 aa).

A Glutamine amidotransferase type-1 domain is found at 4 to 209 (PVVVFEYGSG…RLLANWIGSL (206 aa)). Residue cysteine 82 is the Nucleophile of the active site. Residues histidine 190 and glutamate 192 contribute to the active site.

In terms of assembly, heterodimer of HisH and HisF.

The protein resides in the cytoplasm. The catalysed reaction is 5-[(5-phospho-1-deoxy-D-ribulos-1-ylimino)methylamino]-1-(5-phospho-beta-D-ribosyl)imidazole-4-carboxamide + L-glutamine = D-erythro-1-(imidazol-4-yl)glycerol 3-phosphate + 5-amino-1-(5-phospho-beta-D-ribosyl)imidazole-4-carboxamide + L-glutamate + H(+). The enzyme catalyses L-glutamine + H2O = L-glutamate + NH4(+). Its pathway is amino-acid biosynthesis; L-histidine biosynthesis; L-histidine from 5-phospho-alpha-D-ribose 1-diphosphate: step 5/9. Its function is as follows. IGPS catalyzes the conversion of PRFAR and glutamine to IGP, AICAR and glutamate. The HisH subunit catalyzes the hydrolysis of glutamine to glutamate and ammonia as part of the synthesis of IGP and AICAR. The resulting ammonia molecule is channeled to the active site of HisF. In Leifsonia xyli subsp. xyli (strain CTCB07), this protein is Imidazole glycerol phosphate synthase subunit HisH.